Here is a 147-residue protein sequence, read N- to C-terminus: Large ribosomal subunit protein uL15 (147 aa).

Residues 1–12 (MTLRLNDLKPAD) are compositionally biased toward basic and acidic residues. A disordered region spans residues 1 to 61 (MTLRLNDLKP…GFEGGQTPMQ (61 aa)). The span at 23–33 (RGIGSGLGKTA) shows a compositional bias: gly residues. The segment covering 34 to 47 (GRGHKGSFARKGGG) has biased composition (basic residues).

The protein belongs to the universal ribosomal protein uL15 family. As to quaternary structure, part of the 50S ribosomal subunit.

Its function is as follows. Binds to the 23S rRNA. In Xanthomonas oryzae pv. oryzae (strain MAFF 311018), this protein is Large ribosomal subunit protein uL15.